The primary structure comprises 387 residues: Chorismate synthase (387 aa).

Arg40 and Arg46 together coordinate NADP(+). Residues 129–131 (RSS), 250–251 (QA), Gly295, 310–314 (KPIPT), and Arg336 each bind FMN.

Belongs to the chorismate synthase family. Homotetramer. It depends on FMNH2 as a cofactor.

It catalyses the reaction 5-O-(1-carboxyvinyl)-3-phosphoshikimate = chorismate + phosphate. Its pathway is metabolic intermediate biosynthesis; chorismate biosynthesis; chorismate from D-erythrose 4-phosphate and phosphoenolpyruvate: step 7/7. Functionally, catalyzes the anti-1,4-elimination of the C-3 phosphate and the C-6 proR hydrogen from 5-enolpyruvylshikimate-3-phosphate (EPSP) to yield chorismate, which is the branch point compound that serves as the starting substrate for the three terminal pathways of aromatic amino acid biosynthesis. This reaction introduces a second double bond into the aromatic ring system. The sequence is that of Chorismate synthase from Desulforamulus reducens (strain ATCC BAA-1160 / DSM 100696 / MI-1) (Desulfotomaculum reducens).